Reading from the N-terminus, the 468-residue chain is UDP-N-acetylmuramate--L-alanine ligase (468 aa).

Gly121–Thr127 lines the ATP pocket.

The protein belongs to the MurCDEF family.

It localises to the cytoplasm. It catalyses the reaction UDP-N-acetyl-alpha-D-muramate + L-alanine + ATP = UDP-N-acetyl-alpha-D-muramoyl-L-alanine + ADP + phosphate + H(+). Its pathway is cell wall biogenesis; peptidoglycan biosynthesis. Its function is as follows. Cell wall formation. This Borreliella afzelii (strain PKo) (Borrelia afzelii) protein is UDP-N-acetylmuramate--L-alanine ligase.